Here is a 669-residue protein sequence, read N- to C-terminus: uncharacterized protein (669 aa).

12 consecutive transmembrane segments (helical) span residues 9 to 29 (PLVI…IFIA), 48 to 68 (FSWF…ILSV), 87 to 107 (FLSW…MFFG), 139 to 159 (WGIH…YFGF), 186 to 206 (AIDV…LGFG), 224 to 244 (SFAL…FSAI), 259 to 279 (LTLA…LYLL), 314 to 334 (WTVL…LFIA), 345 to 365 (FIFG…TVFG), 397 to 417 (YLPL…LFFI), 444 to 464 (AIMW…SGGL), and 470 to 490 (MTLI…FSLW).

The protein belongs to the BCCT transporter (TC 2.A.15) family.

Its subcellular location is the cell inner membrane. This is an uncharacterized protein from Haemophilus influenzae (strain ATCC 51907 / DSM 11121 / KW20 / Rd).